The following is a 132-amino-acid chain: Small ribosomal subunit protein uS8 (132 aa).

This sequence belongs to the universal ribosomal protein uS8 family. Part of the 30S ribosomal subunit. Contacts proteins S5 and S12.

In terms of biological role, one of the primary rRNA binding proteins, it binds directly to 16S rRNA central domain where it helps coordinate assembly of the platform of the 30S subunit. The polypeptide is Small ribosomal subunit protein uS8 (Agrobacterium fabrum (strain C58 / ATCC 33970) (Agrobacterium tumefaciens (strain C58))).